A 569-amino-acid chain; its full sequence is MISKLKPQFMFLPKKHILSYCRKDVLNLFEQKFYYTSKRKESNNMKNESLLRLINYNRYYNKIDSNNYYNGGKILSNDRQYIYSPLCEYKKKINDISSYVSVPFKINIRNLGTSNFVNNKKDVLDNDYIYENIKKEKSKHKKIIFLLFVSLFGLYGFFESYNPEFFLYDIFLKFCLKYIDGEICHDLFLLLGKYNILPYDTSNDSIYACTNIKHLDFINPFGVAAGFDKNGVCIDSILKLGFSFIEIGTITPRGQTGNAKPRIFRDVESRSIINSCGFNNMGCDKVTENLILFRKRQEEDKLLSKHIVGVSIGKNKDTVNIVDDLKYCINKIGRYADYIAINVSSPNTPGLRDNQEAGKLKNIILSVKEEIDNLEKNNIMNDESTYNEDNKIVEKKNNFNKNNSHMMKDAKDNFLWFNTTKKKPLVFVKLAPDLNQEQKKEIADVLLETNIDGMIISNTTTQINDIKSFENKKGGVSGAKLKDISTKFICEMYNYTNKQIPIIASGGIFSGLDALEKIEAGASVCQLYSCLVFNGMKSAVQIKRELNHLLYQRGYYNLKEAIGRKHSKS.

The N-terminal 23 residues, 1-23 (MISKLKPQFMFLPKKHILSYCRK), are a transit peptide targeting the mitochondrion. The chain crosses the membrane as a helical span at residues 143 to 163 (IIFLLFVSLFGLYGFFESYNP). FMN contacts are provided by residues 225–229 (AGFDK) and T249. Residue K229 participates in substrate binding. Residues 274–278 (NSCGF) and N342 contribute to the substrate site. N342 contacts FMN. The Nucleophile role is filled by S345. N347 lines the substrate pocket. K429 provides a ligand contact to FMN. 458–459 (NT) lines the substrate pocket. FMN contacts are provided by residues 477 to 478 (SG), 505 to 507 (SGG), and 528 to 529 (YS).

This sequence belongs to the dihydroorotate dehydrogenase family. Type 2 subfamily. As to quaternary structure, monomer. FMN is required as a cofactor.

It localises to the mitochondrion inner membrane. It catalyses the reaction (S)-dihydroorotate + a quinone = orotate + a quinol. It participates in pyrimidine metabolism; UMP biosynthesis via de novo pathway; orotate from (S)-dihydroorotate (quinone route): step 1/1. Catalyzes the conversion of dihydroorotate to orotate with quinone as electron acceptor. The protein is Dihydroorotate dehydrogenase (quinone), mitochondrial of Plasmodium falciparum (isolate 3D7).